We begin with the raw amino-acid sequence, 163 residues long: NADH-quinone oxidoreductase subunit I (163 aa).

4Fe-4S ferredoxin-type domains lie at 54–84 (LRRY…IDAE) and 94–123 (TRYD…EGPN). Cys64, Cys67, Cys70, Cys74, Cys103, Cys106, Cys109, and Cys113 together coordinate [4Fe-4S] cluster.

It belongs to the complex I 23 kDa subunit family. In terms of assembly, NDH-1 is composed of at least 14 different subunits, Nqo1 to Nqo14. The complex has a L-shaped structure, with the hydrophobic arm (subunits Nqo7, Nqo8, Nqo10 to Nqo14) embedded in the inner membrane and the hydrophilic peripheral arm (subunits Nqo1 to Nqo6, Nqo9) protruding into the bacterial cytoplasm. The hydrophilic domain contains all the redox centers. NADH-quinone oxidoreductase forms a supercomplex with ubiquinol-cytochrome c reductase complex (complex III or cytochrome b-c1 complex) and cytochrome c oxidase (complex IV), which stabilizes the NADH-quinone oxidoreductase complex. It depends on [4Fe-4S] cluster as a cofactor.

Its subcellular location is the cell inner membrane. The enzyme catalyses a quinone + NADH + 5 H(+)(in) = a quinol + NAD(+) + 4 H(+)(out). Its function is as follows. NDH-1 shuttles electrons from NADH, via FMN and iron-sulfur (Fe-S) centers, to quinones in the respiratory chain. The immediate electron acceptor for the enzyme in this species is believed to be ubiquinone. Couples the redox reaction to proton translocation (for every two electrons transferred, four hydrogen ions are translocated across the cytoplasmic membrane), and thus conserves the redox energy in a proton gradient. This chain is NADH-quinone oxidoreductase subunit I, found in Paracoccus denitrificans (strain Pd 1222).